The sequence spans 319 residues: uncharacterized protein (319 aa).

One can recognise an SIS domain in the interval 36–178 (IIEFLLSFKG…MTVIHEERGF (143 aa)). 51–56 (GIGKSG) is an ATP binding site. CBS domains lie at 203-263 (MRSG…HLKT) and 268-319 (MTKN…MGVS).

It belongs to the SIS family. GutQ/KpsF subfamily.

This is an uncharacterized protein from Rickettsia prowazekii (strain Madrid E).